Reading from the N-terminus, the 275-residue chain is Phosphate import ATP-binding protein PstB 1 (275 aa).

The region spanning F22–P261 is the ABC transporter domain. G54–S61 is a binding site for ATP.

The protein belongs to the ABC transporter superfamily. Phosphate importer (TC 3.A.1.7) family. In terms of assembly, the complex is composed of two ATP-binding proteins (PstB), two transmembrane proteins (PstC and PstA) and a solute-binding protein (PstS).

The protein resides in the cell inner membrane. It carries out the reaction phosphate(out) + ATP + H2O = ADP + 2 phosphate(in) + H(+). In terms of biological role, part of the ABC transporter complex PstSACB involved in phosphate import. Responsible for energy coupling to the transport system. This Trichormus variabilis (strain ATCC 29413 / PCC 7937) (Anabaena variabilis) protein is Phosphate import ATP-binding protein PstB 1.